The following is a 134-amino-acid chain: Beta-synuclein (134 aa).

2 consecutive repeat copies span residues 20-30 (EKTKQGVTEAA) and 31-41 (EKTKEGVLYVG). Residues 20–67 (EKTKQGVTEAAEKTKEGVLYVGSKTREGVVQGVASVAEKTKEQASHLG) form a 4 X 11 AA tandem repeats of [EGS]-K-T-K-[EQ]-[GQ]-V-X(4) region. A 3; approximate repeat occupies 42-56 (SKTREGVVQGVASVA). Copy 4 of the repeat occupies 57–67 (EKTKEQASHLG). The interval 89 to 134 (FPTDLKPEEVAQEAAEEPLIEPLMEPEGESYEDPPQEEYQEYEPEA) is disordered. Residues 98–134 (VAQEAAEEPLIEPLMEPEGESYEDPPQEEYQEYEPEA) show a composition bias toward acidic residues. S118 bears the Phosphoserine; by BARK1, CK2 and GRK5 mark.

This sequence belongs to the synuclein family. Phosphorylated. Phosphorylation by G-protein coupled receptor kinases (GRK) is more efficient than phosphorylation by CK1, CK2 and CaM-kinase II. In terms of tissue distribution, expressed predominantly in brain; concentrated in presynaptic nerve terminals.

It is found in the cytoplasm. In terms of biological role, non-amyloid component of senile plaques found in Alzheimer disease. Could act as a regulator of SNCA aggregation process. Protects neurons from staurosporine and 6-hydroxy dopamine (6OHDA)-stimulated caspase activation in a p53/TP53-dependent manner. Contributes to restore the SNCA anti-apoptotic function abolished by 6OHDA. Not found in the Lewy bodies associated with Parkinson disease. The protein is Beta-synuclein (SNCB) of Homo sapiens (Human).